Here is a 585-residue protein sequence, read N- to C-terminus: Neopullulanase 2 (585 aa).

Ca(2+)-binding residues include asparagine 143, aspartate 145, asparagine 148, aspartate 149, glycine 169, and aspartate 171. Residues histidine 244 and arginine 323 each contribute to the substrate site. Catalysis depends on aspartate 325, which acts as the Nucleophile. Glutamate 354 serves as the catalytic Proton donor. Substrate-binding positions include 420-421 (HD), aspartate 465, and arginine 469.

Belongs to the glycosyl hydrolase 13 family. Monomer. Ca(2+) serves as cofactor.

The catalysed reaction is Hydrolysis of pullulan to panose (6-alpha-D-glucosylmaltose).. Hydrolyzes pullulan efficiently but only a small amount of starch. Endohydrolysis of 1,4-alpha-glucosidic linkages in pullulan to form panose. Also cleaves (1-6)-alpha-glucosidic linkages to form maltotriose. The polypeptide is Neopullulanase 2 (tvaII) (Thermoactinomyces vulgaris).